The sequence spans 414 residues: Testis-specific Y-encoded-like protein 4 (414 aa).

Disordered stretches follow at residues 1 to 129 (MSGL…AGQK) and 391 to 414 (PRRG…FQSG). Over residues 24–40 (ASGDPDRDQCQGLREET) the composition is skewed to basic and acidic residues. The segment covering 101–112 (EAASAAEAADSS) has biased composition (low complexity).

The protein belongs to the nucleosome assembly protein (NAP) family.

This chain is Testis-specific Y-encoded-like protein 4 (TSPYL4), found in Homo sapiens (Human).